The following is a 177-amino-acid chain: Large ribosomal subunit protein uL6 (177 aa).

Belongs to the universal ribosomal protein uL6 family. In terms of assembly, part of the 50S ribosomal subunit.

In terms of biological role, this protein binds to the 23S rRNA, and is important in its secondary structure. It is located near the subunit interface in the base of the L7/L12 stalk, and near the tRNA binding site of the peptidyltransferase center. This chain is Large ribosomal subunit protein uL6, found in Variovorax paradoxus (strain S110).